The following is a 505-amino-acid chain: Peroxisome proliferator-activated receptor gamma (505 aa).

Residue Thr84 is glycosylated (O-linked (GlcNAc) threonine). Ser112 carries the post-translational modification Phosphoserine; by MAPK. Positions 136-210 form a DNA-binding region, nuclear receptor; sequence AIECRVCGDK…VGMSHNAIRF (75 aa). NR C4-type zinc fingers lie at residues 139 to 159 and 176 to 198; these read CRVCGDKASGFHYGVHACEGC and CDLNCRIHKKSRNKCQYCRFQKC. Positions 205–280 are interaction with FAM120B; the sequence is HNAIRFGRMP…DKSPFVIYDM (76 aa). The NR LBD domain occupies 238–503; the sequence is DLRALAKHLY…HPLLQEIYKD (266 aa). A Glycyl lysine isopeptide (Lys-Gly) (interchain with G-Cter in ubiquitin) cross-link involves residue Lys252. Residues 495 to 503 carry the 9aaTAD motif; that stretch reads PLLQEIYKD.

It belongs to the nuclear hormone receptor family. NR1 subfamily. As to quaternary structure, interacts with FOXO1 (acetylated form). Heterodimer with other nuclear receptors, such as RXRA. The heterodimer with the retinoic acid receptor RXRA is called adipocyte-specific transcription factor ARF6. Interacts with NCOA6 coactivator, leading to a strong increase in transcription of target genes. Interacts with coactivator PPARBP, leading to a mild increase in transcription of target genes. Interacts with NOCA7 in a ligand-inducible manner. Interacts with NCOA1 and NCOA2 LXXLL motifs. Interacts with ASXL1, ASXL2, DNTTIP2, FAM120B, MAP2K1/MEK1, NR0B2, PDPK1, PRDM16, PRMT2 and TGFB1I1. Interacts (when activated by agonist) with PPP5C. Interacts with HELZ2 and THRAP3; the interaction stimulates the transcriptional activity of PPARG. Interacts with PER2, the interaction is ligand dependent and blocks PPARG recruitment to target promoters. Interacts with NOCT. Interacts with ACTN4. Interacts (when in the liganded conformation) with GPS2. Interacts with CRY1 and CRY2 in a ligand-dependent manner. In the absence of hormonal ligand, interacts with TACC1. In macrophages, interacts with PAQR3 and STUB1; the interactions promote PPARG poylubiquitination and STUB1-mediated degradation. In terms of processing, phosphorylated by MAPK. The phosphorylation inhibits PPAR gamma activity. O-GlcNAcylation at Thr-84 reduces transcriptional activity in adipocytes. Post-translationally, phosphorylated at basal conditions and dephosphorylated when treated with the ligand. May be dephosphorylated by PPP5C. The phosphorylated form may be inactive and dephosphorylation at induces adipogenic activity. In terms of processing, ubiquitinated by E3 ubiquitin-protein ligase complex containing FBXO9; leading to proteasomal degradation. Ubiquitinated at Lys-252 by TRIM55 leading to proteasomal degradation. Ubiquitinated by E3 ubiquitin-protein ligase STUB1/CHIP; leading to proteasomal degradation. Highest expression in adipose tissue.

Its subcellular location is the nucleus. The protein resides in the cytoplasm. PDPK1 activates its transcriptional activity independently of its kinase activity. In terms of biological role, nuclear receptor that binds peroxisome proliferators such as hypolipidemic drugs and fatty acids. Once activated by a ligand, the nuclear receptor binds to DNA specific PPAR response elements (PPRE) and modulates the transcription of its target genes, such as acyl-CoA oxidase. It therefore controls the peroxisomal beta-oxidation pathway of fatty acids. Key regulator of adipocyte differentiation and glucose homeostasis. ARF6 acts as a key regulator of the tissue-specific adipocyte P2 (aP2) enhancer. Acts as a critical regulator of gut homeostasis by suppressing NF-kappa-B-mediated pro-inflammatory responses. Plays a role in the regulation of cardiovascular circadian rhythms by regulating the transcription of BMAL1 in the blood vessels. This is Peroxisome proliferator-activated receptor gamma (Pparg) from Rattus norvegicus (Rat).